The sequence spans 239 residues: Sugar fermentation stimulation protein homolog (239 aa).

It belongs to the SfsA family.

The protein is Sugar fermentation stimulation protein homolog of Microcystis aeruginosa (strain NIES-843 / IAM M-2473).